A 94-amino-acid chain; its full sequence is Small ribosomal subunit protein uS19 (94 aa).

Belongs to the universal ribosomal protein uS19 family.

Functionally, protein S19 forms a complex with S13 that binds strongly to the 16S ribosomal RNA. This Pelotomaculum thermopropionicum (strain DSM 13744 / JCM 10971 / SI) protein is Small ribosomal subunit protein uS19.